The chain runs to 61 residues: Venom protein 22.1 (61 aa).

A signal peptide spans 1–18 (MDIKGLLVILFFVLLITG).

This sequence belongs to the non-disulfide-bridged peptide (NDBP) superfamily. Long chain multifunctional peptide (group 2) family. As to expression, expressed by the venom gland.

It localises to the secreted. In Lychas mucronatus (Chinese swimming scorpion), this protein is Venom protein 22.1.